A 528-amino-acid chain; its full sequence is Na(+)/H(+) antiporter NhaB (528 aa).

The Cytoplasmic portion of the chain corresponds to 1-23 (MPISLGNAFIKNFLGKAPDWYKV). Residues 24–46 (AIIAFLIINPIVFFLINPFVAGW) form a helical membrane-spanning segment. Topologically, residues 47 to 95 (LLVAEFIFTLAMALKCYPLQPGGLLAIEAIAIGMTSPAQVKHELVANIE) are periplasmic. The chain crosses the membrane as a helical span at residues 96-118 (VLLLLVFMVAGIYFMKHLLLFIF). The Cytoplasmic segment spans residues 119 to 129 (TKILLGIRSKT). The chain crosses the membrane as a helical span at residues 130-163 (LLSLAFCFAAAFLSAFLDALTVIAVVISVAIGFY). Over 164–239 (SIYHKVASGN…ADQAGWLFGE (76 aa)) the chain is Periplasmic. A helical membrane pass occupies residues 240-262 (FLIRMSPVTLPVFFCGLITCALV). Residues 263 to 297 (EKLKVFGYGAKLPNNVRQILVDFDNEERKTRTNQD) lie on the Cytoplasmic side of the membrane. A helical transmembrane segment spans residues 298–317 (VAKLWVQGLIAVWLIVALAL). Residues 318–320 (HLA) lie on the Periplasmic side of the membrane. A helical transmembrane segment spans residues 321–340 (AVGLIGLSVIILATAFTGVI). The Cytoplasmic segment spans residues 341–352 (EEHSMGKAFEEA). The helical transmembrane segment at 353–375 (LPFTALLAVFFSIVAVIIDQELF) threads the bilayer. Residues 376-389 (KPVIDAVLAVEDKG) are Periplasmic-facing. A helical membrane pass occupies residues 390-412 (TQLALFYVANGLLSMVSDNVFVG). The Cytoplasmic portion of the chain corresponds to 413-477 (TVYINEVKTA…PLIRLSYGRM (65 aa)). The helical transmembrane segment at 478-500 (VIMALPYTIVLAIVGLMGIMFFL) threads the bilayer. Residues 501–528 (EPATASFYDAGWILPHSGDLTPVVSGGH) lie on the Periplasmic side of the membrane.

This sequence belongs to the NhaB Na(+)/H(+) (TC 2.A.34) antiporter family.

It localises to the cell inner membrane. The enzyme catalyses 2 Na(+)(in) + 3 H(+)(out) = 2 Na(+)(out) + 3 H(+)(in). Na(+)/H(+) antiporter that extrudes sodium in exchange for external protons. In Vibrio alginolyticus, this protein is Na(+)/H(+) antiporter NhaB.